A 160-amino-acid chain; its full sequence is Cyclic pyranopterin monophosphate synthase (160 aa).

Residues 76 to 78 (MCH) and 113 to 114 (ME) contribute to the substrate site. Asp-128 is an active-site residue.

Belongs to the MoaC family. Homohexamer; trimer of dimers.

It carries out the reaction (8S)-3',8-cyclo-7,8-dihydroguanosine 5'-triphosphate = cyclic pyranopterin phosphate + diphosphate. It participates in cofactor biosynthesis; molybdopterin biosynthesis. Functionally, catalyzes the conversion of (8S)-3',8-cyclo-7,8-dihydroguanosine 5'-triphosphate to cyclic pyranopterin monophosphate (cPMP). The chain is Cyclic pyranopterin monophosphate synthase from Brevibacillus brevis (strain 47 / JCM 6285 / NBRC 100599).